The chain runs to 246 residues: Thaumatin-like protein 1 (246 aa).

The signal sequence occupies residues 1-24 (MMKSQAALLGLTTLAILFFSGAHA). 8 disulfides stabilise this stretch: Cys-33–Cys-245, Cys-81–Cys-91, Cys-96–Cys-103, Cys-151–Cys-234, Cys-156–Cys-217, Cys-164–Cys-180, Cys-184–Cys-193, and Cys-194–Cys-204.

This sequence belongs to the thaumatin family. As to expression, equally expressed in the abscission zone and surrounding tissues of both fruitlets and leaves.

It is found in the secreted. Functionally, may be involved in protecting plant tissues from pathogen infection. The protein is Thaumatin-like protein 1 of Prunus persica (Peach).